The sequence spans 90 residues: Acylphosphatase (90 aa).

The region spanning Thr-4–Tyr-90 is the Acylphosphatase-like domain. Active-site residues include Arg-19 and Asn-37.

This sequence belongs to the acylphosphatase family.

It carries out the reaction an acyl phosphate + H2O = a carboxylate + phosphate + H(+). This is Acylphosphatase (acyP) from Caldanaerobacter subterraneus subsp. tengcongensis (strain DSM 15242 / JCM 11007 / NBRC 100824 / MB4) (Thermoanaerobacter tengcongensis).